A 238-amino-acid chain; its full sequence is Probable transcriptional regulatory protein SGO_0454 (238 aa).

The protein belongs to the TACO1 family. YeeN subfamily.

It is found in the cytoplasm. This chain is Probable transcriptional regulatory protein SGO_0454, found in Streptococcus gordonii (strain Challis / ATCC 35105 / BCRC 15272 / CH1 / DL1 / V288).